Here is a 448-residue protein sequence, read N- to C-terminus: MSISKAIEKVEARYAHQPEFIQAVKEVAITIKPLYDAHPEYDKLKVFERLVEPDRVFGFRVNWEDDNGEIQINRGWRVQFSNALGPYKGGLRFHPTVNQSVLKFLGFEQIFKNALTGLPIGGGKGGSDFDPKGKTDSEIRRFCYAFMRELHHYVNKDMDVPAGDIGVGGREVSYMFAMYKNLTRESTGVITGKGVGFGGSLMRTEATGYGAVYFLQNMLAAQNESIEGKKVLVSGAGNVSLHAAEKATLIGAIVLTVSDSKGTIYDAKGLNQEKIDWLKVQKDQHKPLADYVEVFGGEWMADQKPWSIKADIAIPSATQNEINEEDAKLLVDNGVKYIVEGANMPLTAEAIDYIRLHRVHYAPGKAANAGGVAVSALEMSQNSVRQYQTFEQVDERLQGIMKDIHDSSAQASEMYGQTDEGYIDYMSGANMVGFKRVADALVAFGILN.

Substrate contacts are provided by Lys88, Gln109, and Lys112. The active-site Proton donor is the Lys124. Gly163 serves as a coordination point for substrate. Positions 207 and 238 each coordinate NADP(+). Residue Ser375 participates in substrate binding.

This sequence belongs to the Glu/Leu/Phe/Val dehydrogenases family. In terms of assembly, homohexamer.

It carries out the reaction L-glutamate + NADP(+) + H2O = 2-oxoglutarate + NH4(+) + NADPH + H(+). Catalyzes the reversible oxidative deamination of glutamate to alpha-ketoglutarate and ammonia. The sequence is that of NADP-specific glutamate dehydrogenase (gdhA) from Psychrobacter sp. (strain TAD1).